Here is a 301-residue protein sequence, read N- to C-terminus: UDP-N-acetylenolpyruvoylglucosamine reductase (301 aa).

Residues Val-30–Gly-194 enclose the FAD-binding PCMH-type domain. Arg-173 is an active-site residue. Ser-223 acts as the Proton donor in catalysis. The active site involves Glu-293.

Belongs to the MurB family. FAD is required as a cofactor.

It is found in the cytoplasm. It catalyses the reaction UDP-N-acetyl-alpha-D-muramate + NADP(+) = UDP-N-acetyl-3-O-(1-carboxyvinyl)-alpha-D-glucosamine + NADPH + H(+). It functions in the pathway cell wall biogenesis; peptidoglycan biosynthesis. Its function is as follows. Cell wall formation. The protein is UDP-N-acetylenolpyruvoylglucosamine reductase of Streptococcus pneumoniae (strain Hungary19A-6).